A 520-amino-acid chain; its full sequence is Flavin-dependent halogenase radH (520 aa).

The FAD site is built by glycine 14, alanine 17, and glutamate 47. Residues serine 330 and glycine 331 each coordinate chloride.

It belongs to the flavin-dependent halogenase family.

Its pathway is secondary metabolite biosynthesis. Functionally, non-heme halogenase; part of the gene cluster that mediates the biosynthesis of radicicol, a resorcylic acid lactone (RAL) that irreversibly inhibits the HSP90 molecular chaperone, an important target for cancer chemotherapy. The cluster encodes only two apparent post-PKS enzymes, a cytochrome P450 monooxygenase (radP) and a non-heme halogenase (radH) that introduce the epoxide and the chlorine, respectively. If this cluster includes all the genes required for radicicol biosynthesis, the remaining structural features of radicicol are presumably generated by the PKSs rads1 and rads2. The C-2' ketone could arise if the R-PKS rads1 and NR-PKS rads2 each carry out four iterations, in contrast to the five iteration-three iteration split for the hypothemycin PKSs. The origin of the cis 5',6' double bond is not known. The radicicol R-PKS rads1 ER domain may catalyze either double bond isomerization or reduction in the third iteration. The sequence is that of Flavin-dependent halogenase radH from Floropilus chiversii (Chaetomium chiversii).